The sequence spans 167 residues: uncharacterized protein (167 aa).

The disordered stretch occupies residues 95–114 (AHSLHHQSHQSDVQVHAKGN).

This is an uncharacterized protein from Haemophilus influenzae (Bacteriophage HP1).